A 406-amino-acid chain; its full sequence is Transcriptional activator NprA (406 aa).

4 TPR repeats span residues 125 to 158, 206 to 239, 246 to 279, and 285 to 318; these read YYYYKFLGLLYYCKEKYEDALEYYKKAEQRFRSQ, AECHILLGICYRRYGEVDQAIECYSLAHKIAQII, GTIEHNLGYLMSMKHEHYEAIQHYKKSLLYKRNS, and FITLFSLIKEYYVSKNYKKALANVEESLQLLKRE.

Functionally, activates the transcription of nprS by about five fold. May bind to the upstream region of nprS promoter. This chain is Transcriptional activator NprA (nprA), found in Geobacillus stearothermophilus (Bacillus stearothermophilus).